The primary structure comprises 719 residues: 2'-5'-oligoadenylate synthase 2 (719 aa).

Gly2 is lipidated: N-myristoyl glycine. 2 OAS domain regions span residues 11–335 (VPAQ…SWNV) and 343–683 (TPGH…WKVP). Lys378 carries the N6-acetyllysine modification. Ser396 contributes to the ATP binding site. Positions 408, 410, and 481 each coordinate Mg(2+). 2 residues coordinate ATP: Arg544 and Lys547.

The protein belongs to the 2-5A synthase family. In terms of assembly, homodimer. Mg(2+) serves as cofactor. Myristoylation is not essential for its activity. In terms of processing, glycosylated. Glycosylation is essential for its activity.

Its subcellular location is the cytoplasm. The protein resides in the perinuclear region. It carries out the reaction 3 ATP = 5'-triphosphoadenylyl-(2'-&gt;5')-adenylyl-(2'-&gt;5')-adenosine + 2 diphosphate. Its activity is regulated as follows. Produced as a latent enzyme which is activated by double stranded RNA (dsRNA) generated during the course of viral infection. The dsRNA activator must be at least 15 nucleotides long, and no modification of the 2'-hydroxyl group is tolerated. ssRNA or dsDNA do not act as activators. Strongly inhibited by copper, iron and zinc ions. Partially inhibited by cobalt and nickel ions. Interferon-induced, dsRNA-activated antiviral enzyme which plays a critical role in cellular innate antiviral response. Activated by detection of double stranded RNA (dsRNA): polymerizes higher oligomers of 2'-5'-oligoadenylates (2-5A) from ATP which then bind to the inactive monomeric form of ribonuclease L (RNASEL) leading to its dimerization and subsequent activation. Activation of RNASEL leads to degradation of cellular as well as viral RNA, resulting in the inhibition of protein synthesis, thus terminating viral replication. Can mediate the antiviral effect via the classical RNASEL-dependent pathway or an alternative antiviral pathway independent of RNASEL. In addition, it may also play a role in other cellular processes such as apoptosis, cell growth, differentiation and gene regulation. May act as a negative regulator of lactation, stopping lactation in virally infected mammary gland lobules, thereby preventing transmission of viruses to neonates. Non-infected lobules would not be affected, allowing efficient pup feeding during infection. The protein is 2'-5'-oligoadenylate synthase 2 of Homo sapiens (Human).